We begin with the raw amino-acid sequence, 270 residues long: MWQGNLELIYKQKNLATEINHVYATAPLKVQRPFYPEGKNLCHTVILHTAGGIVGGDVLQQKIHLQAATNALITTASAGKVYQSNGQMAQQLIEIKIDDNASLEWLPQETIIFNGAAFRQHLRVDLGENSSWLGWEITRFGRSARGEKFLAGEWHSNWEIWRSGQPLWLDRSCLLGGKMIEGFSGLNDSALIGTLVYIGQPVGRNLIEKVRDFSLEGERGVTNTLGDGLLCRYRGNSSGEVRQWFQQVWQILRREMSDQEAIIPRVWLSW.

It belongs to the UreD family. UreD, UreF and UreG form a complex that acts as a GTP-hydrolysis-dependent molecular chaperone, activating the urease apoprotein by helping to assemble the nickel containing metallocenter of UreC. The UreE protein probably delivers the nickel.

Its subcellular location is the cytoplasm. Its function is as follows. Required for maturation of urease via the functional incorporation of the urease nickel metallocenter. In Microcystis aeruginosa (strain NIES-843 / IAM M-2473), this protein is Urease accessory protein UreD.